Consider the following 359-residue polypeptide: GDSL esterase/lipase At5g03610 (359 aa).

The first 22 residues, M1–G22, serve as a signal peptide directing secretion. S50 serves as the catalytic Nucleophile. Residues N136, N236, and N259 are each glycosylated (N-linked (GlcNAc...) asparagine). Catalysis depends on residues D332 and H335.

It belongs to the 'GDSL' lipolytic enzyme family.

It localises to the secreted. This Arabidopsis thaliana (Mouse-ear cress) protein is GDSL esterase/lipase At5g03610.